The primary structure comprises 312 residues: Glyoxylate/hydroxypyruvate reductase A (312 aa).

The active site involves R227. The active-site Proton donor is the H275.

The protein belongs to the D-isomer specific 2-hydroxyacid dehydrogenase family. GhrA subfamily.

It is found in the cytoplasm. The catalysed reaction is glycolate + NADP(+) = glyoxylate + NADPH + H(+). It carries out the reaction (R)-glycerate + NAD(+) = 3-hydroxypyruvate + NADH + H(+). It catalyses the reaction (R)-glycerate + NADP(+) = 3-hydroxypyruvate + NADPH + H(+). Catalyzes the NADPH-dependent reduction of glyoxylate and hydroxypyruvate into glycolate and glycerate, respectively. The protein is Glyoxylate/hydroxypyruvate reductase A of Escherichia coli O6:K15:H31 (strain 536 / UPEC).